The primary structure comprises 949 residues: Translation initiation factor IF-2 (949 aa).

Disordered regions lie at residues 46 to 82, 145 to 176, and 188 to 361; these read LTAS…EAEA, EPAV…ERAS, and IPIT…KTEL. The segment covering 152-162 has biased composition (low complexity); that stretch reads ASPAVTAAKPV. The segment covering 163–172 has biased composition (pro residues); the sequence is PATPAAPPQP. Residues 263 to 276 show a composition bias toward low complexity; sequence PRDAAAPRPAGARP. Positions 334–344 are enriched in basic and acidic residues; sequence SREERQFDPFH. Residues 449–618 enclose the tr-type G domain; the sequence is ERPPVVTIMG…LLQADLMDLK (170 aa). The G1 stretch occupies residues 458–465; it reads GHVDHGKT. 458 to 465 serves as a coordination point for GTP; it reads GHVDHGKT. Positions 483–487 are G2; sequence GITQH. A G3 region spans residues 504–507; it reads DTPG. GTP contacts are provided by residues 504-508 and 558-561; these read DTPGH and NKID. Residues 558-561 are G4; that stretch reads NKID. The tract at residues 594 to 596 is G5; that stretch reads SAK.

It belongs to the TRAFAC class translation factor GTPase superfamily. Classic translation factor GTPase family. IF-2 subfamily.

It is found in the cytoplasm. Its function is as follows. One of the essential components for the initiation of protein synthesis. Protects formylmethionyl-tRNA from spontaneous hydrolysis and promotes its binding to the 30S ribosomal subunits. Also involved in the hydrolysis of GTP during the formation of the 70S ribosomal complex. This Trichlorobacter lovleyi (strain ATCC BAA-1151 / DSM 17278 / SZ) (Geobacter lovleyi) protein is Translation initiation factor IF-2.